Reading from the N-terminus, the 55-residue chain is Sporulation killing factor (55 aa).

The propeptide occupies 1-29 (MKRNQKEWESVSKKGLMKPGGTSIVKAAG). Cysteines 30 and 45 form a disulfide. Positions 30 to 55 (CMGCWASKSIAMTRVCALPHPAMRAI) form a cross-link, cyclopeptide (Cys-Ile). A cross-link (2-(S-cysteinyl)-methionine (Cys-Met)) is located at residues 33–41 (CWASKSIAM).

This is a cyclic peptide. The first step in SKF maturation is probably thioether bond formation.

It is found in the secreted. Its function is as follows. Produces a 26-residue extracellular sporulation killing factor (SKF) that induces the lysis of other B.subtilis cells that have not entered the sporulation pathway, providing a source of nutrients to support sporulation, and at the same time delaying commitment to the energetically expensive and irreversible onset of sporulation. Can also inhibit growth of other bacteria at high concentrations. Addition of SKF to solid cultures induces killing, but it is much less effective than SDP (AC O34344). Has a role in protecting the secreted lipase LipA against proteolysis, either by modulating its folding or by acting as a protease inhibitor. This chain is Sporulation killing factor, found in Bacillus subtilis (strain 168).